The primary structure comprises 429 residues: Palmitoyltransferase SWF1 (429 aa).

Residues 1-3 (MGT) are Lumenal-facing. A helical transmembrane segment spans residues 4–24 (IAIIAAVILGISFMTFVAFFG). At 25–79 (RLPALRNTPISFLHRLIWIHLPNGILTVDRTLTNGRLTTSLTRLGRHLWYDQHPT) the chain is on the cytoplasmic side. A helical transmembrane segment spans residues 80-100 (ILIFFFLLLSVGEYLYLPVAW). The Lumenal portion of the chain corresponds to 101-112 (PHFSFTHKFFGT). Residues 113–133 (IAILCPYIFLYLSAYTDPGVI) traverse the membrane as a helical segment. Topologically, residues 134–201 (NAKTHVREMA…CVGANNQRWF (68 aa)) are cytoplasmic. Positions 156–206 (TSCETCHLLKPARSKHCSICKKCVGRMDHHCIFINNCVGANNQRWFILLLL) constitute a DHHC domain. Residues 202–222 (ILLLLSTAILTLYGGVLGLVI) traverse the membrane as a helical segment. Over 223 to 274 (IRAKIQARFPYWTLMPWWTSTQAWNSGDLDFHRWLLLWSWGLQSGVAMGGVT) the chain is Lumenal. The chain crosses the membrane as a helical span at residues 275 to 295 (LLALLTTPLVWGLLGYHLWLV). Over 296–429 (YCGTTTNESM…ERGRNRRRSS (134 aa)) the chain is Cytoplasmic. Basic and acidic residues predominate over residues 408-421 (GRSPVDEREFGRER). The disordered stretch occupies residues 408-429 (GRSPVDEREFGRERGRNRRRSS).

This sequence belongs to the DHHC palmitoyltransferase family. SWF1 subfamily.

The protein resides in the endoplasmic reticulum membrane. The catalysed reaction is L-cysteinyl-[protein] + hexadecanoyl-CoA = S-hexadecanoyl-L-cysteinyl-[protein] + CoA. Palmitoyltransferase that targets several endosomal SNAREs. Palmitoylates the SNAREs at cysteine residues close to the cytoplasmic end of their transmembrane domain. May have a role in the cellular quality control of transmembrane domain-containing proteins. This Neurospora crassa (strain ATCC 24698 / 74-OR23-1A / CBS 708.71 / DSM 1257 / FGSC 987) protein is Palmitoyltransferase SWF1 (swf-1).